Consider the following 554-residue polypeptide: Calcium-dependent protein kinase 3 (554 aa).

Positions 30-55 (KKKSSNKSIKSQHKFEGSKIANKNNE) are disordered. The region spanning 110–365 (NLSEEPLGKG…ASEALKHPWF (256 aa)) is the Protein kinase domain. ATP contacts are provided by residues 116-124 (LGKGTYGCV) and Lys-139. The active-site Proton acceptor is Asp-230. Positions 385–393 (NFKNYALLL) match the J domain autoinhibitory motif motif. Residues 385-420 (NFKNYALLLKLQKLAMTIIAQQSNDYDLQQLKTVFL) are j domain. The short motif at 394-403 (KLQKLAMTII) is the J domain EF-hand interaction motif element. 4 EF-hand domains span residues 410 to 445 (YDLQ…SGLK), 448 to 479 (QNFD…DRKH), 480 to 515 (LSKK…GNKK), and 521 to 554 (KDVN…KLKY). Asp-458, Asp-460, Ser-462, Arg-464, Glu-469, Asp-493, Asp-495, Asp-497, Glu-499, Glu-504, Asp-534, Asn-536, Asp-538, Lys-540, and Glu-545 together coordinate Ca(2+).

This sequence belongs to the protein kinase superfamily. Ser/Thr protein kinase family. CDPK subfamily. Mg(2+) is required as a cofactor.

The protein localises to the cytoplasm. The enzyme catalyses L-seryl-[protein] + ATP = O-phospho-L-seryl-[protein] + ADP + H(+). The catalysed reaction is L-threonyl-[protein] + ATP = O-phospho-L-threonyl-[protein] + ADP + H(+). Activated by calcium. Upon calcium binding to the EF-hand domain 2, the C-terminus of the junction domain (J domain) undergoes a conformational change which results in the dissociation of the pseudo-substrate inhibitory motif from the catalytic domain. This, in turn, may facilitate the autophosphorylation of the activation loop at Thr-271, which leads to the kinase activation. In terms of biological role, calcium-dependent protein kinase which acts as a sensor and effector of intracellular Ca(2+) levels probably in part downstream of cGMP-activated PKG kinase. In the mosquito midgut, regulates the gliding motility of the ookinete which is essential for the ookinete to invade the midgut epithelium. However, another study showed that while required for ookinete invasion of the midgut epithelium, is not required for ookinete gliding motility. The chain is Calcium-dependent protein kinase 3 from Plasmodium berghei (strain Anka).